We begin with the raw amino-acid sequence, 319 residues long: Acetylglutamate kinase (319 aa).

Residues 74–75, arginine 96, and asparagine 210 contribute to the substrate site; that span reads GG.

Belongs to the acetylglutamate kinase family. ArgB subfamily.

Its subcellular location is the cytoplasm. The enzyme catalyses N-acetyl-L-glutamate + ATP = N-acetyl-L-glutamyl 5-phosphate + ADP. It functions in the pathway amino-acid biosynthesis; L-arginine biosynthesis; N(2)-acetyl-L-ornithine from L-glutamate: step 2/4. Its function is as follows. Catalyzes the ATP-dependent phosphorylation of N-acetyl-L-glutamate. The chain is Acetylglutamate kinase from Pseudarthrobacter chlorophenolicus (strain ATCC 700700 / DSM 12829 / CIP 107037 / JCM 12360 / KCTC 9906 / NCIMB 13794 / A6) (Arthrobacter chlorophenolicus).